A 239-amino-acid chain; its full sequence is Ribosomal RNA small subunit methyltransferase G (239 aa).

S-adenosyl-L-methionine is bound by residues G77, F82, 128–129 (AE), and R146. The disordered stretch occupies residues 214-239 (IDKKRQTPKKYPRKPGTPNKTPLLEK).

It belongs to the methyltransferase superfamily. RNA methyltransferase RsmG family.

The protein localises to the cytoplasm. In terms of biological role, specifically methylates the N7 position of guanine in position 535 of 16S rRNA. This Staphylococcus aureus (strain Mu3 / ATCC 700698) protein is Ribosomal RNA small subunit methyltransferase G.